Consider the following 125-residue polypeptide: uncharacterized protein (125 aa).

Residues 10 to 26 traverse the membrane as a helical segment; it reads IIILVCLMFLAIMVYIY.

Its subcellular location is the membrane. This is an uncharacterized protein from Rickettsia prowazekii (strain Madrid E).